Reading from the N-terminus, the 552-residue chain is Putative transport protein HAPS_0158 (552 aa).

5 helical membrane passes run 4–24 (IALTVSLLSLVAVIGLWIGHI), 28–48 (GVSLGIGGVLFGGILVSHFMT), 65–85 (FGLILFVYTIGIQVGPGFFAS), 95–115 (AFAVMIVGISGILVILLHKIF), and 157–177 (MGYAIAYPFGIIGILLAMWLI). RCK C-terminal domains lie at 193–275 (DSAT…ILGE) and 277–360 (VNVS…IIGN). Helical transmembrane passes span 370–390 (MLPIFIGVGLGVLLGSIPIYL), 393–413 (FPVALKLGLAGGPLVVALILA), 438–458 (IVLFLAVVGWKAGGNFLNTLL), 463–483 (LAWIGYGAIITFVPLIVTGLV), 492–512 (YLSLCGLLAGSMTDPPALAFA), and 532–552 (LVMFCRIILPQILAILLWVAG).

This sequence belongs to the AAE transporter (TC 2.A.81) family. YidE subfamily.

It localises to the cell membrane. This is Putative transport protein HAPS_0158 from Glaesserella parasuis serovar 5 (strain SH0165) (Haemophilus parasuis).